The primary structure comprises 374 residues: Probable dual-specificity RNA methyltransferase RlmN (374 aa).

The segment covering 1–17 has biased composition (basic and acidic residues); sequence MEKNEISEERRTQEKEK. Residues 1 to 22 are disordered; the sequence is MEKNEISEERRTQEKEKQHGHR. Glu119 functions as the Proton acceptor in the catalytic mechanism. Residues 125 to 360 form the Radical SAM core domain; that stretch reads SEERITACIS…VTVRKSQGAT (236 aa). A disulfide bridge links Cys132 with Cys365. [4Fe-4S] cluster-binding residues include Cys139, Cys143, and Cys146. S-adenosyl-L-methionine is bound by residues 190-191, Ser223, 246-248, and Asn322; these read GE and SLH. The S-methylcysteine intermediate role is filled by Cys365.

The protein belongs to the radical SAM superfamily. RlmN family. [4Fe-4S] cluster is required as a cofactor.

Its subcellular location is the cytoplasm. It catalyses the reaction adenosine(2503) in 23S rRNA + 2 reduced [2Fe-2S]-[ferredoxin] + 2 S-adenosyl-L-methionine = 2-methyladenosine(2503) in 23S rRNA + 5'-deoxyadenosine + L-methionine + 2 oxidized [2Fe-2S]-[ferredoxin] + S-adenosyl-L-homocysteine. The enzyme catalyses adenosine(37) in tRNA + 2 reduced [2Fe-2S]-[ferredoxin] + 2 S-adenosyl-L-methionine = 2-methyladenosine(37) in tRNA + 5'-deoxyadenosine + L-methionine + 2 oxidized [2Fe-2S]-[ferredoxin] + S-adenosyl-L-homocysteine. In terms of biological role, specifically methylates position 2 of adenine 2503 in 23S rRNA and position 2 of adenine 37 in tRNAs. The sequence is that of Probable dual-specificity RNA methyltransferase RlmN from Chlorobaculum tepidum (strain ATCC 49652 / DSM 12025 / NBRC 103806 / TLS) (Chlorobium tepidum).